Here is a 117-residue protein sequence, read N- to C-terminus: Large ribosomal subunit protein bL31B (117 aa).

Residues 75–117 are disordered; sequence KRFERKKEASPADTPPESDSTTENASVEKKAEKKRVTAKGSKK. Over residues 100 to 109 the composition is skewed to basic and acidic residues; sequence SVEKKAEKKR.

This sequence belongs to the bacterial ribosomal protein bL31 family. Type B subfamily. As to quaternary structure, part of the 50S ribosomal subunit.

This Protochlamydia amoebophila (strain UWE25) protein is Large ribosomal subunit protein bL31B.